Consider the following 210-residue polypeptide: Somatotropin (210 aa).

Positions 1–22 are cleaved as a signal peptide; sequence MGQVFLLMPVLLVSCFLSQGAA. Position 38 (His38) interacts with Zn(2+). Cys71 and Cys183 are oxidised to a cystine. Residue Glu192 participates in Zn(2+) binding. A disulfide bridge connects residues Cys200 and Cys208.

Belongs to the somatotropin/prolactin family.

Its subcellular location is the secreted. Its function is as follows. Growth hormone plays an important role in growth control and is involved in the regulation of several anabolic processes. Implicated as an osmoregulatory substance important for seawater adaptation. The polypeptide is Somatotropin (gh) (Oncorhynchus tshawytscha (Chinook salmon)).